Reading from the N-terminus, the 274-residue chain is Penicillin-insensitive murein endopeptidase (274 aa).

A signal peptide spans Met-1–Ala-19. 3 cysteine pairs are disulfide-bonded: Cys-44–Cys-265, Cys-187–Cys-235, and Cys-216–Cys-223. 6 residues coordinate Zn(2+): His-110, His-113, Asp-120, Asp-147, His-150, and His-211. Residues Pro-227 to Ile-274 form a disordered region.

Belongs to the peptidase M74 family. Dimer. Zn(2+) is required as a cofactor.

The protein localises to the periplasm. Functionally, murein endopeptidase that cleaves the D-alanyl-meso-2,6-diamino-pimelyl amide bond that connects peptidoglycan strands. Likely plays a role in the removal of murein from the sacculus. This is Penicillin-insensitive murein endopeptidase from Escherichia coli O17:K52:H18 (strain UMN026 / ExPEC).